A 208-amino-acid polypeptide reads, in one-letter code: Protein-L-isoaspartate O-methyltransferase (208 aa).

Residue S59 is part of the active site.

Belongs to the methyltransferase superfamily. L-isoaspartyl/D-aspartyl protein methyltransferase family.

It is found in the cytoplasm. The enzyme catalyses [protein]-L-isoaspartate + S-adenosyl-L-methionine = [protein]-L-isoaspartate alpha-methyl ester + S-adenosyl-L-homocysteine. In terms of biological role, catalyzes the methyl esterification of L-isoaspartyl residues in peptides and proteins that result from spontaneous decomposition of normal L-aspartyl and L-asparaginyl residues. It plays a role in the repair and/or degradation of damaged proteins. This is Protein-L-isoaspartate O-methyltransferase from Shigella sonnei (strain Ss046).